Reading from the N-terminus, the 447-residue chain is Argininosuccinate lyase (447 aa).

The protein belongs to the lyase 1 family. Argininosuccinate lyase subfamily.

Its subcellular location is the cytoplasm. The enzyme catalyses 2-(N(omega)-L-arginino)succinate = fumarate + L-arginine. The protein operates within amino-acid biosynthesis; L-arginine biosynthesis; L-arginine from L-ornithine and carbamoyl phosphate: step 3/3. The polypeptide is Argininosuccinate lyase (Sulfolobus acidocaldarius (strain ATCC 33909 / DSM 639 / JCM 8929 / NBRC 15157 / NCIMB 11770)).